The chain runs to 274 residues: 2,3,4,5-tetrahydropyridine-2,6-dicarboxylate N-succinyltransferase (274 aa).

R106 and D143 together coordinate substrate.

The protein belongs to the transferase hexapeptide repeat family. In terms of assembly, homotrimer.

The protein resides in the cytoplasm. It catalyses the reaction (S)-2,3,4,5-tetrahydrodipicolinate + succinyl-CoA + H2O = (S)-2-succinylamino-6-oxoheptanedioate + CoA. It functions in the pathway amino-acid biosynthesis; L-lysine biosynthesis via DAP pathway; LL-2,6-diaminopimelate from (S)-tetrahydrodipicolinate (succinylase route): step 1/3. This is 2,3,4,5-tetrahydropyridine-2,6-dicarboxylate N-succinyltransferase from Rickettsia felis (strain ATCC VR-1525 / URRWXCal2) (Rickettsia azadi).